The chain runs to 555 residues: Developmental regulatory protein wetA (555 aa).

4 disordered regions span residues 113 to 171 (TGHS…LMRS), 250 to 310 (QSPA…SESL), 419 to 488 (TQAV…RGGK), and 508 to 531 (GVAPSGSSKTKARREQEARDRRRK). Composition is skewed to polar residues over residues 162–171 (QSFSPGLMRS), 259–281 (PSANALAGQQQRYLSQTGTSALT), 293–310 (SPHSSDPQSMPSWHSESL), 419–431 (TQAVPHPSRSPSI), and 464–488 (SGQSTSTPKPVKTPNSLSTSPRGGK).

It belongs to the wetA family.

In terms of biological role, brlA, abaA and wetA are pivotal regulators of conidiophore development and conidium maturation. They act individually and together to regulate their own expression and that of numerous other sporulation-specific genes. Responsible for activating a set of genes whose products make up the final two conidial wall layers or direct their assembly and, through this activity, is responsible for acquisition of spore dormancy. This chain is Developmental regulatory protein wetA, found in Emericella nidulans (strain FGSC A4 / ATCC 38163 / CBS 112.46 / NRRL 194 / M139) (Aspergillus nidulans).